The primary structure comprises 953 residues: Isoleucine--tRNA ligase (953 aa).

The 'HIGH' region motif lies at 57 to 67 (PYANGDIHIGH). Glu582 is a binding site for L-isoleucyl-5'-AMP. Positions 623 to 627 (KMSKS) match the 'KMSKS' region motif. Position 626 (Lys626) interacts with ATP. Zn(2+) is bound by residues Cys916, Cys919, Cys936, and Cys939.

The protein belongs to the class-I aminoacyl-tRNA synthetase family. IleS type 1 subfamily. As to quaternary structure, monomer. Zn(2+) is required as a cofactor.

It localises to the cytoplasm. It catalyses the reaction tRNA(Ile) + L-isoleucine + ATP = L-isoleucyl-tRNA(Ile) + AMP + diphosphate. Functionally, catalyzes the attachment of isoleucine to tRNA(Ile). As IleRS can inadvertently accommodate and process structurally similar amino acids such as valine, to avoid such errors it has two additional distinct tRNA(Ile)-dependent editing activities. One activity is designated as 'pretransfer' editing and involves the hydrolysis of activated Val-AMP. The other activity is designated 'posttransfer' editing and involves deacylation of mischarged Val-tRNA(Ile). This is Isoleucine--tRNA ligase from Bordetella petrii (strain ATCC BAA-461 / DSM 12804 / CCUG 43448).